Consider the following 354-residue polypeptide: Uroporphyrinogen decarboxylase (354 aa).

Substrate contacts are provided by residues 27-31 (RQAGR), Phe46, Asp77, Tyr154, Thr209, and His327.

Belongs to the uroporphyrinogen decarboxylase family. As to quaternary structure, homodimer.

It localises to the cytoplasm. The enzyme catalyses uroporphyrinogen III + 4 H(+) = coproporphyrinogen III + 4 CO2. It functions in the pathway porphyrin-containing compound metabolism; protoporphyrin-IX biosynthesis; coproporphyrinogen-III from 5-aminolevulinate: step 4/4. Catalyzes the decarboxylation of four acetate groups of uroporphyrinogen-III to yield coproporphyrinogen-III. This Photorhabdus laumondii subsp. laumondii (strain DSM 15139 / CIP 105565 / TT01) (Photorhabdus luminescens subsp. laumondii) protein is Uroporphyrinogen decarboxylase.